Reading from the N-terminus, the 412-residue chain is MLTKKDTQSAKEQEKLKAIPLHSFLKYANVFYLSIGMMAYDHKYSQKWKEVLLHWTFIAQMVNLNTVLISELIYVFLAIGKGSNFLEATMNLSFIGFVIVGDFKIWNISRQRKRLTQVVSRLEELHPQGLAQQEPYNIGHHLSGYSRYSKFYFGMHMVLIWTYNLYWAVYYLVCDFWLGMRQFERMLPYYCWVPWDWSTGYSYYFMYISQNIGGQACLSGQLAADMLMCALVTLVVMHFIRLSAHIESHVAGIGSFQHDLEFLQATVAYHQSLIHLCQDINEIFGVSLLSNFVSSSFIICFVGFQMTIGSKIDNLVMLVLFLFCAMVQVFMIATHAQRLVDASEQIGQAVYNHDWFRADLRYRKMLILIIKRAQQPSRLKATMFLNISLVTVSDLLQLSYKFFALLRTMYVN.

The Cytoplasmic portion of the chain corresponds to 1–56 (MLTKKDTQSAKEQEKLKAIPLHSFLKYANVFYLSIGMMAYDHKYSQKWKEVLLHWT). The helical transmembrane segment at 57–77 (FIAQMVNLNTVLISELIYVFL) threads the bilayer. The Extracellular segment spans residues 78 to 84 (AIGKGSN). Residues 85–105 (FLEATMNLSFIGFVIVGDFKI) traverse the membrane as a helical segment. Over 106–152 (WNISRQRKRLTQVVSRLEELHPQGLAQQEPYNIGHHLSGYSRYSKFY) the chain is Cytoplasmic. The helical transmembrane segment at 153–173 (FGMHMVLIWTYNLYWAVYYLV) threads the bilayer. Residues 174 to 219 (CDFWLGMRQFERMLPYYCWVPWDWSTGYSYYFMYISQNIGGQACLS) lie on the Extracellular side of the membrane. The chain crosses the membrane as a helical span at residues 220–240 (GQLAADMLMCALVTLVVMHFI). Residues 241-282 (RLSAHIESHVAGIGSFQHDLEFLQATVAYHQSLIHLCQDINE) are Cytoplasmic-facing. A helical transmembrane segment spans residues 283–303 (IFGVSLLSNFVSSSFIICFVG). Topologically, residues 304–314 (FQMTIGSKIDN) are extracellular. The helical transmembrane segment at 315–335 (LVMLVLFLFCAMVQVFMIATH) threads the bilayer. Residues 336–382 (AQRLVDASEQIGQAVYNHDWFRADLRYRKMLILIIKRAQQPSRLKAT) lie on the Cytoplasmic side of the membrane. The helical transmembrane segment at 383 to 403 (MFLNISLVTVSDLLQLSYKFF) threads the bilayer. Topologically, residues 404–412 (ALLRTMYVN) are extracellular.

It belongs to the insect chemoreceptor superfamily. Heteromeric odorant receptor channel (TC 1.A.69) family. Or49a subfamily. As to quaternary structure, interacts with Orco. Complexes exist early in the endomembrane system in olfactory sensory neurons (OSNs), coupling these complexes to the conserved ciliary trafficking pathway. As to expression, expressed in olfactory sensory neurons in the maxillary palp.

Its subcellular location is the cell membrane. Functionally, odorant receptor which mediates acceptance or avoidance behavior, depending on its substrates. The odorant receptor repertoire encodes a large collection of odor stimuli that vary widely in identity, intensity, and duration. May form a complex with Orco to form odorant-sensing units, providing sensitive and prolonged odorant signaling and calcium permeability. In Drosophila melanogaster (Fruit fly), this protein is Putative odorant receptor 85d (Or85d).